Reading from the N-terminus, the 356-residue chain is Isopentenyl-diphosphate delta-isomerase (356 aa).

Substrate is bound at residue 8–9 (RK). FMN contacts are provided by residues 66 to 68 (AIT), Ser96, and Asn124. 96 to 98 (SQR) lines the substrate pocket. Substrate is bound at residue Gln160. Glu161 is a binding site for Mg(2+). FMN is bound by residues Lys201, Thr231, 280–282 (GIR), and 301–302 (AL).

This sequence belongs to the IPP isomerase type 2 family. Homooctamer. Dimer of tetramers. The cofactor is FMN. NADPH is required as a cofactor. Mg(2+) serves as cofactor.

The protein localises to the cytoplasm. The catalysed reaction is isopentenyl diphosphate = dimethylallyl diphosphate. Functionally, involved in the biosynthesis of isoprenoids. Catalyzes the 1,3-allylic rearrangement of the homoallylic substrate isopentenyl (IPP) to its allylic isomer, dimethylallyl diphosphate (DMAPP). This is Isopentenyl-diphosphate delta-isomerase from Methanococcus aeolicus (strain ATCC BAA-1280 / DSM 17508 / OCM 812 / Nankai-3).